The sequence spans 153 residues: Putative pre-16S rRNA nuclease (153 aa).

The protein belongs to the YqgF nuclease family.

The protein localises to the cytoplasm. Its function is as follows. Could be a nuclease involved in processing of the 5'-end of pre-16S rRNA. This Prochlorococcus marinus (strain SARG / CCMP1375 / SS120) protein is Putative pre-16S rRNA nuclease.